Here is a 237-residue protein sequence, read N- to C-terminus: E3 protein (237 aa).

The segment covering 73–103 (VEVVEDEEEEEAAEDVEEPTSEEDSEDEWEE) has biased composition (acidic residues). A disordered region spans residues 73–105 (VEVVEDEEEEEAAEDVEEPTSEEDSEDEWEEGY).

Hypothesized to function in the shutoff of host biosyntheses. But it seems dispensable both for host shutoff and for phage multiplication. Its shutoff function is probably not entirely specific to host activities. The sequence is that of E3 protein (44) from Bacillus phage SP01 (Bacteriophage SP01).